The following is a 4062-amino-acid chain: Transcription-associated protein 1 (4062 aa).

Residues 531–562 (LASEPSTSEDADESGGDPNKLPPPTKEGKKTS) form a disordered region. TPR repeat units lie at residues 1346–1379 (LDGV…LLDI) and 1677–1714 (RRSF…DDEE). Basic and acidic residues predominate over residues 2659-2670 (VETEMKREEPEP). Positions 2659-2692 (VETEMKREEPEPMEVDEKDSQDDSKDAGEPKEKE) are disordered. A compositionally biased stretch (acidic residues) spans 2671 to 2680 (MEVDEKDSQD). Over residues 2681–2692 (DSKDAGEPKEKE) the composition is skewed to basic and acidic residues. Residues 2800–3411 (LIEFISSKHE…FYHIREAVSV (612 aa)) enclose the FAT domain. A TPR 3 repeat occupies 2847 to 2880 (IETLESLGTLYNEISEFDQFAAIWERRAVFPDTM). The PI3K/PI4K catalytic domain maps to 3682–4046 (EPNFEIVIKG…DCVSLISRAK (365 aa)). The segment at 3688 to 3694 (VIKGGQV) is G-loop. The interval 3902–3910 (NLTPMGPDQ) is catalytic loop. The interval 3922 to 3950 (NPSYRFEIRGGRSLHDIQHFGHEVPFRLT) is activation loop. Residues 4031–4062 (AKLRKDDCVSLISRAKDSDNLARMPPTYHAWF) enclose the FATC domain.

The protein belongs to the PI3/PI4-kinase family. TRA1 subfamily. As to quaternary structure, interacts with histone acetyltransferase Tip60 homolog mys-1. Probably a component of a complex with histone acetyltransferase (HAT) activity, at least composed of mys-1 and trr-1. As to expression, expressed in germ cells and somatic cells.

The protein localises to the nucleus. It is found in the chromosome. Its function is as follows. Influences germ cell fate in hermaphrodites. Acts downstream of tra-2 and tra-3 and through the Tip60 histone acetyltransferase complex to regulate germ cell fate decisions. Required for spermatogenesis and embryonic development. Acts with tra-2 to promote expression of fog-3 and control male tail development. Involved in the negative regulation of vulval development. Involved in the positive regulation of transcription factor daf-16, probably acting by histone acetylation; thereby modulating stress resistance. Plays a role in acetylation of nucleosomal histone H4, probably acting as a component of the Tip60 histone acetyltransferase complex. The protein is Transcription-associated protein 1 of Caenorhabditis elegans.